Here is a 37-residue protein sequence, read N- to C-terminus: Large ribosomal subunit protein bL36 (37 aa).

Belongs to the bacterial ribosomal protein bL36 family.

This Geobacter sp. (strain M21) protein is Large ribosomal subunit protein bL36.